The primary structure comprises 348 residues: Selenide, water dikinase (348 aa).

Cys-17 is a catalytic residue. Residues Lys-20 and 47–49 (THD) contribute to the ATP site. Residue Asp-50 coordinates Mg(2+). Residues Asp-67, Asp-90, and 138–140 (GHT) contribute to the ATP site. Asp-90 is a Mg(2+) binding site. A Mg(2+)-binding site is contributed by Asp-226.

It belongs to the selenophosphate synthase 1 family. Class I subfamily. As to quaternary structure, homodimer. Mg(2+) serves as cofactor.

It carries out the reaction hydrogenselenide + ATP + H2O = selenophosphate + AMP + phosphate + 2 H(+). Functionally, synthesizes selenophosphate from selenide and ATP. This Porphyromonas gingivalis (strain ATCC BAA-308 / W83) protein is Selenide, water dikinase.